Reading from the N-terminus, the 156-residue chain is Arginine repressor (156 aa).

Belongs to the ArgR family.

Its subcellular location is the cytoplasm. It participates in amino-acid biosynthesis; L-arginine biosynthesis [regulation]. Functionally, regulates arginine biosynthesis genes. This Shewanella woodyi (strain ATCC 51908 / MS32) protein is Arginine repressor.